Reading from the N-terminus, the 250-residue chain is Pyrroloquinoline-quinone synthase (250 aa).

The protein belongs to the PqqC family.

It catalyses the reaction 6-(2-amino-2-carboxyethyl)-7,8-dioxo-1,2,3,4,7,8-hexahydroquinoline-2,4-dicarboxylate + 3 O2 = pyrroloquinoline quinone + 2 H2O2 + 2 H2O + H(+). It participates in cofactor biosynthesis; pyrroloquinoline quinone biosynthesis. Ring cyclization and eight-electron oxidation of 3a-(2-amino-2-carboxyethyl)-4,5-dioxo-4,5,6,7,8,9-hexahydroquinoline-7,9-dicarboxylic-acid to PQQ. The protein is Pyrroloquinoline-quinone synthase of Xanthomonas oryzae pv. oryzae (strain PXO99A).